The chain runs to 320 residues: Biotin synthase (320 aa).

The Radical SAM core domain occupies 45–274; the sequence is NDLQKASLLS…DSRIRLSAGR (230 aa). Residues cysteine 60, cysteine 64, and cysteine 67 each coordinate [4Fe-4S] cluster. 4 residues coordinate [2Fe-2S] cluster: cysteine 105, cysteine 137, cysteine 197, and arginine 269.

The protein belongs to the radical SAM superfamily. Biotin synthase family. In terms of assembly, homodimer. [4Fe-4S] cluster serves as cofactor. [2Fe-2S] cluster is required as a cofactor.

It carries out the reaction (4R,5S)-dethiobiotin + (sulfur carrier)-SH + 2 reduced [2Fe-2S]-[ferredoxin] + 2 S-adenosyl-L-methionine = (sulfur carrier)-H + biotin + 2 5'-deoxyadenosine + 2 L-methionine + 2 oxidized [2Fe-2S]-[ferredoxin]. It functions in the pathway cofactor biosynthesis; biotin biosynthesis; biotin from 7,8-diaminononanoate: step 2/2. Catalyzes the conversion of dethiobiotin (DTB) to biotin by the insertion of a sulfur atom into dethiobiotin via a radical-based mechanism. The protein is Biotin synthase of Beijerinckia indica subsp. indica (strain ATCC 9039 / DSM 1715 / NCIMB 8712).